A 555-amino-acid chain; its full sequence is Formate--tetrahydrofolate ligase (555 aa).

65–72 contacts ATP; that stretch reads TPAGEGKS.

It belongs to the formate--tetrahydrofolate ligase family.

The enzyme catalyses (6S)-5,6,7,8-tetrahydrofolate + formate + ATP = (6R)-10-formyltetrahydrofolate + ADP + phosphate. It functions in the pathway one-carbon metabolism; tetrahydrofolate interconversion. The sequence is that of Formate--tetrahydrofolate ligase from Staphylococcus aureus (strain bovine RF122 / ET3-1).